Consider the following 439-residue polypeptide: Ribosomal protein uS12 methylthiotransferase RimO (439 aa).

Residues 7–119 (KQLCLISLGC…IDIMIAKKQN (113 aa)) enclose the MTTase N-terminal domain. [4Fe-4S] cluster-binding residues include Cys16, Cys50, Cys82, Cys151, Cys155, and Cys158. The region spanning 137 to 365 (TGSSVHAYVK…NKIALKHQNN (229 aa)) is the Radical SAM core domain.

This sequence belongs to the methylthiotransferase family. RimO subfamily. [4Fe-4S] cluster is required as a cofactor.

It is found in the cytoplasm. It catalyses the reaction L-aspartate(89)-[ribosomal protein uS12]-hydrogen + (sulfur carrier)-SH + AH2 + 2 S-adenosyl-L-methionine = 3-methylsulfanyl-L-aspartate(89)-[ribosomal protein uS12]-hydrogen + (sulfur carrier)-H + 5'-deoxyadenosine + L-methionine + A + S-adenosyl-L-homocysteine + 2 H(+). Catalyzes the methylthiolation of an aspartic acid residue of ribosomal protein uS12. This Helicobacter pylori (strain Shi470) protein is Ribosomal protein uS12 methylthiotransferase RimO.